The following is a 238-amino-acid chain: Thiamine import ATP-binding protein ThiQ (238 aa).

The ABC transporter domain maps to 1-234; it reads MSSTALAVKG…RDIAAINRFL (234 aa). 36–43 provides a ligand contact to ATP; that stretch reads GASGSGKS.

Belongs to the ABC transporter superfamily. Thiamine importer (TC 3.A.1.19.1) family. The complex is composed of two ATP-binding proteins (ThiQ), two transmembrane proteins (ThiP) and a solute-binding protein (ThiB).

The protein localises to the cell inner membrane. The catalysed reaction is thiamine(out) + ATP + H2O = thiamine(in) + ADP + phosphate + H(+). Part of the ABC transporter complex ThiBPQ involved in thiamine import. Responsible for energy coupling to the transport system. This is Thiamine import ATP-binding protein ThiQ from Rhizobium meliloti (strain 1021) (Ensifer meliloti).